The primary structure comprises 1819 residues: Protein REDUCED CHLOROPLAST COVERAGE 2 (1819 aa).

The span at 1 to 17 shows a compositional bias: basic residues; the sequence is MAPKAGKTKPHKSKGEK. Disordered regions lie at residues 1–23, 128–180, 595–619, and 634–664; these read MAPK…KEEK, KPPV…GACE, QASS…GLGK, and KANK…LEKQ. 2 stretches are compositionally biased toward basic and acidic residues: residues 135-145 and 600-612; these read LPKDSEKKESG and SESK…KPEP. Residues 329-603 form the Clu domain; sequence EDETWGGDGG…NQASSKSESK (275 aa). A coiled-coil region spans residues 649-680; sequence TDNTSETEDQKELEKQNEEIEKMWKELVTETA. 5 TPR repeats span residues 892–925, 934–967, 976–1009, 1018–1051, and 1060–1093; these read GRTL…LVAV, AGAY…NERE, MKSY…LHLT, AATY…NQRL, and AASY…LQAK. Disordered stretches follow at residues 1152-1360, 1413-1456, 1468-1513, 1527-1573, 1616-1670, and 1731-1809; these read SGIK…PMLS, KVNA…SPKE, KAFP…SESV, LKTV…ASAP, STPH…PRIM, and LVSE…DYSD. 2 stretches are compositionally biased toward basic and acidic residues: residues 1199-1224 and 1230-1239; these read SSDK…EQSK and KLVKPEATVH. S1244 is modified (phosphoserine). The segment covering 1269 to 1313 has biased composition (polar residues); it reads KLNTNFMNVTQQPSRSRGKSTNFTSPRTSSNELSISVAGSTSSPA. Phosphoserine is present on S1320. The segment covering 1343–1354 has biased composition (polar residues); that stretch reads LASSACTEQINK. Polar residues-rich tracts occupy residues 1496–1511 and 1536–1546; these read CLLN…NGSE and NLPNGDSSPKS. A compositionally biased stretch (basic and acidic residues) spans 1551-1566; sequence DGEKQDACEAQKEMSK. The segment covering 1650-1665 has biased composition (polar residues); that stretch reads SFPNSTESNGEANQFN. The segment covering 1742–1759 has biased composition (basic and acidic residues); that stretch reads SEEKSGSEEESNNDKNAG. The segment covering 1767–1778 has biased composition (polar residues); the sequence is QETTDTPENGHS. The segment covering 1785–1800 has biased composition (basic and acidic residues); that stretch reads TTSHETCDEKNGERQG.

In terms of tissue distribution, expressed in the non-epidermal tissues of the true leaves. Not detected in the vegetative shoot meristem and leaf primordia.

It is found in the nucleus. The protein resides in the cytoplasm. Its subcellular location is the cytosol. Functionally, negatively regulates meristematic tissue proliferation by integrating developmental signals with carbon source availability. May act as the scaffold of a protein complex, which sequesters key factors that are required for the G2 to M transition in meristematic tissues. Together with REC2, REC3 and FMT/CLU, contributes to the establishment of the cellular volume devoted to the chloroplast compartment. This Arabidopsis thaliana (Mouse-ear cress) protein is Protein REDUCED CHLOROPLAST COVERAGE 2.